Here is a 120-residue protein sequence, read N- to C-terminus: Non-specific lipid-transfer protein (120 aa).

An N-terminal signal peptide occupies residues 1-26; sequence MASSMSLKLACVVVLCMVVGAPLAQG. 3 cysteine pairs are disulfide-bonded: Cys40/Cys56, Cys57/Cys102, and Cys77/Cys116.

It belongs to the plant LTP family.

In terms of biological role, plant non-specific lipid-transfer proteins transfer phospholipids as well as galactolipids across membranes. May play a role in wax or cutin deposition in the cell walls of expanding epidermal cells and certain secretory tissues. This Gossypium hirsutum (Upland cotton) protein is Non-specific lipid-transfer protein.